Reading from the N-terminus, the 264-residue chain is MNQILLCSPILLLLFTVASCDSEQQLDSAMHLKSDSTKSASLKNVAPKNDETQAKIAKDDVALKDAKKGDYIMDIDISDLPLDDYPINRSKSLKSSSIDLNNIPFNKGLDDFPAKEKNQGSNQSALKALQQRLLTEQNNSLLLRNHSIYLMKEIEARKTDIIKVRQLNLDLELELNTVNRRLLELNGQLQNTRKSTKPCKKRSSKDSAPPAANQFQEANVRNTYRNKYLTLLKELSQKINNEIAKVATDVPTETNPSQGNLPTL.

The signal sequence occupies residues 1-18 (MNQILLCSPILLLLFTVA). The interval 1–138 (MNQILLCSPI…LQQRLLTEQN (138 aa)) is sufficient for promoting ovulation when expressed in females. 4 N-linked (GlcNAc...) asparagine glycosylation sites follow: Asn88, Asn122, Asn138, and Asn145. The disordered stretch occupies residues 189 to 219 (LQNTRKSTKPCKKRSSKDSAPPAANQFQEAN). Over residues 194–203 (KSTKPCKKRS) the composition is skewed to basic residues. The interval 219–264 (NVRNTYRNKYLTLLKELSQKINNEIAKVATDVPTETNPSQGNLPTL) is necessary and sufficient for homodimerization.

As to quaternary structure, homodimer. May form a homodimer. In terms of processing, glycosylation. Undergoes several cleavages as it is secreted and is further processed in the recipient female. The precursor molecule is proteolytically cleaved by the seminal metalloprotease Semp1 at Lys-48 to produce CP1-N and CP1-C. Post-translationally, cleaved at Lys-67 by Semp1 to generate CP2-N and CP2-C. Cleavage appears to take place in the mated female genital tract. In terms of processing, cleaved at Lys-117 by Semp1 to generate CP3-N and CP3-C. Cleavage appears to take place in the mated female genital tract. Produced in the male accessory glands and secreted into seminal fluid (at protein level). Detected in the main cells and secondary cells of the accessory glands of 1 day old males (at protein level). In 5 day old males, confined to the secondary cells and only reappears in the main cells after mating (at protein level). Produced in adult males 3-4 hr after eclosion, levels increase reaching a peak at day 3-5 which is maintained until at least day 10 of adulthood (at protein level). In unmated male adults, levels are maintained for the first 6 days of adulthood and then gradually decrease for at least the next 8 days. In mated females, detected in the genital tract 3 minutes after the start of mating (ASM) and is secreted into the female hemolymph via the posterior vaginal wall 5 minutes ASM (at protein level).

The protein localises to the secreted. The protein resides in the cytoplasm. Its function is as follows. Male seminal protein which enhances ovulation in female Drosophila by stimulating the release of oocytes by the ovary following mating. Acts by increasing octopamine (OA) neuronal signaling in the female genital tract leading to the postmating relaxation of the oviduct muscles. This activation of the OA signaling pathway is likely to indirectly contribute to the mating-dependent increase in the number of OA synaptic sites in the female reproductive tract. In terms of biological role, male seminal peptide which is able to enhance ovulation in female Drosophila. This is Accessory gland-specific peptide 26Aa from Drosophila melanogaster (Fruit fly).